Consider the following 155-residue polypeptide: Endoribonuclease YbeY (155 aa).

3 residues coordinate Zn(2+): His-119, His-123, and His-129.

This sequence belongs to the endoribonuclease YbeY family. Zn(2+) is required as a cofactor.

It is found in the cytoplasm. Its function is as follows. Single strand-specific metallo-endoribonuclease involved in late-stage 70S ribosome quality control and in maturation of the 3' terminus of the 16S rRNA. In Mycoplasmopsis synoviae (strain 53) (Mycoplasma synoviae), this protein is Endoribonuclease YbeY.